A 449-amino-acid chain; its full sequence is Maltose-6'-phosphate glucosidase (449 aa).

6–72 (FSIVIAGGGS…PDIEFAATTD (67 aa)) contacts NAD(+). R95 and N149 together coordinate substrate. C171 lines the Mn(2+) pocket. D172 serves as the catalytic Proton donor. H202 contacts Mn(2+). The active-site Proton acceptor is the Y265. R285 is a substrate binding site.

It belongs to the glycosyl hydrolase 4 family. In terms of assembly, homotetramer. It depends on Mn(2+) as a cofactor. Fe(2+) serves as cofactor. Requires Co(2+) as cofactor. The cofactor is Ni(2+). NAD(+) is required as a cofactor.

It catalyses the reaction alpha-maltose 6'-phosphate + H2O = D-glucose 6-phosphate + D-glucose. Its activity is regulated as follows. Cellobiose-6'-phosphate and 6-phospho-beta-D-glucopyranoside are not substrates but competitive inhibitors of GlvA. Its function is as follows. Hydrolyzes maltose-6'-phosphate and trehalose-6'-phosphate. Is involved in the catabolism of alpha-glycosides accumulated via a phosphoenolpyruvate-dependent maltose phosphotransferase system (PEP-PTS). Is also able to significantly catalyze the hydrolysis of both 6-phospho-alpha- and 6-phospho-beta-glucosides containing activated leaving groups such as p-nitrophenol and does so with retention and inversion, respectively, of the substrate anomeric configuration. This Bacillus subtilis (strain 168) protein is Maltose-6'-phosphate glucosidase (glvA).